Consider the following 145-residue polypeptide: uncharacterized protein (145 aa).

A run of 2 helical transmembrane segments spans residues 20–40 and 116–136; these read LIGP…GMFF and MIML…VLSA.

It is found in the membrane. This is an uncharacterized protein from Saccharomyces cerevisiae (strain ATCC 204508 / S288c) (Baker's yeast).